Reading from the N-terminus, the 413-residue chain is MEKPNNTITDVLEGIVTEILVRLPLRSISRFKSVSQTWKSAIESVYFRRLFVSLHQNTSSSWSLLLRKEEFIDFHGCGTWGLPKSLGSYIQCMELDGKFEYMWFSGSNGLILMHRKLGTWKNYVGNPVLQQWVEIPACPGSYTFFCGVVTGVDEVGVVLSFKVVKSGNMFLNKGEMYMPLYVYSSETGFWIHKEVVCPVRLPNFYDPISLNGTLYFSQRGDSYNRRPGLMVLDFYGKPKDCHFIPLPDHALNRNKTCLATSSGFVMYIKTLAQPGGNLLKVWRLIDDSAWQLMWEVSIPFIGCYAPMSMHPFDRNIVYLWSHDNCYLMSFNLQTQNYKIFGDESKHHDCYINHRTCEKHMYKISRPYSVSEYEGPIILQQWVLSRWMQSVPRPPEVEMIDTTSLLSLVVKNEE.

Residues 5–54 form the F-box domain; that stretch reads NNTITDVLEGIVTEILVRLPLRSISRFKSVSQTWKSAIESVYFRRLFVSL. A Kelch repeat occupies 168-210; it reads NMFLNKGEMYMPLYVYSSETGFWIHKEVVCPVRLPNFYDPISL.

In Arabidopsis thaliana (Mouse-ear cress), this protein is Putative F-box/kelch-repeat protein At4g22430.